The following is a 71-amino-acid chain: uncharacterized protein (71 aa).

This is an uncharacterized protein from Bacillus subtilis (strain 168).